Here is a 540-residue protein sequence, read N- to C-terminus: Putative rhamnogalacturonase (540 aa).

An N-terminal signal peptide occupies residues Met1–Ala23. Intrachain disulfides connect Cys53-Cys100 and Cys192-Cys203. An N-linked (GlcNAc...) asparagine glycan is attached at Asn89. The N-linked (GlcNAc...) asparagine glycan is linked to Asn368.

It belongs to the polysaccharide lyase 4 family.

Its subcellular location is the secreted. The enzyme catalyses Endotype eliminative cleavage of L-alpha-rhamnopyranosyl-(1-&gt;4)-alpha-D-galactopyranosyluronic acid bonds of rhamnogalacturonan I domains in ramified hairy regions of pectin leaving L-rhamnopyranose at the reducing end and 4-deoxy-4,5-unsaturated D-galactopyranosyluronic acid at the non-reducing end.. Its function is as follows. Could be a pectinolytic enzyme that hydrolyzes the alpha-L-rhamnopyranosyl-(1,4)-alpha-D-galacturonopyranosyl glycosidic linkage by beta-elimination, thereby generating oligosaccharides terminating at the non-reducing end with a hex-4-enopyranosyluronic acid residue. This Neurospora crassa (strain ATCC 24698 / 74-OR23-1A / CBS 708.71 / DSM 1257 / FGSC 987) protein is Putative rhamnogalacturonase (asd-1).